Reading from the N-terminus, the 116-residue chain is Ino eighty subunit 4 (116 aa).

Positions 1-15 (MSQESSVLSESQEQL) are enriched in low complexity. Disordered stretches follow at residues 1–40 (MSQESSVLSESQEQLANNPKIEDTSPPSANSRDNSKPVLP) and 70–116 (EERQ…GLDS). Over residues 84–108 (KGSDDKATRKKEPADEDPEVKQLEK) the composition is skewed to basic and acidic residues.

As to quaternary structure, component of the chromatin-remodeling INO80 complex, at least composed of ARP4, ARP5, ARP8, RVB1, RVB2, TAF14, NHP10, IES1, IES3, IES4, IES6, ACT1, IES2, IES5 and INO80.

The protein localises to the nucleus. This is Ino eighty subunit 4 (IES4) from Saccharomyces cerevisiae (strain ATCC 204508 / S288c) (Baker's yeast).